A 168-amino-acid polypeptide reads, in one-letter code: Lipoprotein signal peptidase (168 aa).

A run of 4 helical transmembrane segments spans residues 15–35 (WLWL…IVME), 47–67 (VLPF…SFLS), 75–95 (WLFT…MSKL), and 107–127 (AMII…GFVV). Catalysis depends on residues Asp128 and Asp146. Residues 141–161 (AFNLADTAICLGAAMIILDGF) traverse the membrane as a helical segment.

It belongs to the peptidase A8 family.

It localises to the cell inner membrane. The catalysed reaction is Release of signal peptides from bacterial membrane prolipoproteins. Hydrolyzes -Xaa-Yaa-Zaa-|-(S,diacylglyceryl)Cys-, in which Xaa is hydrophobic (preferably Leu), and Yaa (Ala or Ser) and Zaa (Gly or Ala) have small, neutral side chains.. It functions in the pathway protein modification; lipoprotein biosynthesis (signal peptide cleavage). In terms of biological role, this protein specifically catalyzes the removal of signal peptides from prolipoproteins. The protein is Lipoprotein signal peptidase of Vibrio vulnificus (strain CMCP6).